Consider the following 542-residue polypeptide: CTP synthase (542 aa).

Residues 1–265 (MARYVFITGG…DSEVLSAFGI (265 aa)) form an amidoligase domain region. A CTP-binding site is contributed by S13. S13 lines the UTP pocket. 14–19 (SLGKGI) is an ATP binding site. Residue Y54 coordinates L-glutamine. An ATP-binding site is contributed by D71. D71 and E139 together coordinate Mg(2+). CTP contacts are provided by residues 146–148 (DIE), 186–191 (KTKPTQ), and K222. Residues 186 to 191 (KTKPTQ) and K222 each bind UTP. The Glutamine amidotransferase type-1 domain maps to 291-541 (TIAVVGKYTG…IEAAIEQSRL (251 aa)). G353 lines the L-glutamine pocket. The Nucleophile; for glutamine hydrolysis role is filled by C380. L-glutamine contacts are provided by residues 381 to 384 (FGMQ), E404, and R469. Catalysis depends on residues H514 and E516.

The protein belongs to the CTP synthase family. In terms of assembly, homotetramer.

It carries out the reaction UTP + L-glutamine + ATP + H2O = CTP + L-glutamate + ADP + phosphate + 2 H(+). It catalyses the reaction L-glutamine + H2O = L-glutamate + NH4(+). The enzyme catalyses UTP + NH4(+) + ATP = CTP + ADP + phosphate + 2 H(+). Its pathway is pyrimidine metabolism; CTP biosynthesis via de novo pathway; CTP from UDP: step 2/2. With respect to regulation, allosterically activated by GTP, when glutamine is the substrate; GTP has no effect on the reaction when ammonia is the substrate. The allosteric effector GTP functions by stabilizing the protein conformation that binds the tetrahedral intermediate(s) formed during glutamine hydrolysis. Inhibited by the product CTP, via allosteric rather than competitive inhibition. Its function is as follows. Catalyzes the ATP-dependent amination of UTP to CTP with either L-glutamine or ammonia as the source of nitrogen. Regulates intracellular CTP levels through interactions with the four ribonucleotide triphosphates. This chain is CTP synthase, found in Brucella suis (strain ATCC 23445 / NCTC 10510).